The following is a 410-amino-acid chain: Serine/threonine transporter SstT (410 aa).

Transmembrane regions (helical) follow at residues Gly15 to Ser35, Phe49 to Ile69, Pro82 to Ser102, Ile118 to Asn138, Ala142 to Phe162, Phe190 to Ala210, Leu217 to Val237, Met299 to Ile319, Leu331 to Ile351, and Phe358 to Leu378.

This sequence belongs to the dicarboxylate/amino acid:cation symporter (DAACS) (TC 2.A.23) family.

It localises to the cell inner membrane. The enzyme catalyses L-serine(in) + Na(+)(in) = L-serine(out) + Na(+)(out). It carries out the reaction L-threonine(in) + Na(+)(in) = L-threonine(out) + Na(+)(out). Functionally, involved in the import of serine and threonine into the cell, with the concomitant import of sodium (symport system). The sequence is that of Serine/threonine transporter SstT from Erwinia tasmaniensis (strain DSM 17950 / CFBP 7177 / CIP 109463 / NCPPB 4357 / Et1/99).